The sequence spans 349 residues: Isopentenyl-diphosphate delta-isomerase (349 aa).

6 to 7 (RK) contributes to the substrate binding site. Residues 62–64 (AMT), S93, and N122 contribute to the FMN site. Residue Q152 participates in substrate binding. E153 is a Mg(2+) binding site. FMN contacts are provided by residues K184, T214, 258 to 259 (GG), and 280 to 281 (AG).

Belongs to the IPP isomerase type 2 family. Homooctamer. Dimer of tetramers. The cofactor is FMN. Requires NADPH as cofactor. It depends on Mg(2+) as a cofactor.

The protein resides in the cytoplasm. It carries out the reaction isopentenyl diphosphate = dimethylallyl diphosphate. Functionally, involved in the biosynthesis of isoprenoids. Catalyzes the 1,3-allylic rearrangement of the homoallylic substrate isopentenyl (IPP) to its allylic isomer, dimethylallyl diphosphate (DMAPP). The sequence is that of Isopentenyl-diphosphate delta-isomerase from Bacillus cytotoxicus (strain DSM 22905 / CIP 110041 / 391-98 / NVH 391-98).